Consider the following 156-residue polypeptide: MPRRRSIEPRKILPDPKFGSELLAKFINVLMVDGKKSIAEKIVYSALDTLAQRTGKEALEAFEAALDNVRPTVEVKSRRVGGSTYQVPVEVRPVRRNALGMRWIVDAARKRGDKSMALRLANELSDASENKGAAVKKREDVHRMAEANKAFAHYRW.

The protein belongs to the universal ribosomal protein uS7 family. As to quaternary structure, part of the 30S ribosomal subunit. Contacts proteins S9 and S11.

In terms of biological role, one of the primary rRNA binding proteins, it binds directly to 16S rRNA where it nucleates assembly of the head domain of the 30S subunit. Is located at the subunit interface close to the decoding center, probably blocks exit of the E-site tRNA. This is Small ribosomal subunit protein uS7 from Pasteurella multocida (strain Pm70).